A 686-amino-acid polypeptide reads, in one-letter code: MEIDAVPMSDTPRKILVTSALPYANGPIHLGHLLEYIQTDIWVRFQKLRGQQCIYVCADDAHGTAIMLKAEENGVTPEQQIAQVKADHERDFADFQVNFDNYYSTHSPENRALSEMVFQRNKDAGYILEKTITQLYDPQKGMFLADRFVKGTCPKCKSEDQYGDNCEVCGATYTPAELIEPYSSVSGATPVEKETTQLFFDLPKFEALLREWTRSGALQEQVANKLQEWIEDLQPWDISREAPYFGFEIPGYPGKYFYVWLDAPIGYMASFQNYCDREGLSFDDYWGKESTAELYHFIGKDIINFHGLFWPAMLDGAGLRKPTAIYSHGFVTVNGAKMSKSRGTFIKARTYLDHLSPEYLRYYFAAKLSSRVDDFDLNLEDFAQRVNSDLVGKLVNIASRTGNFVKKFGGTLSTELDNMMLVREVQEAGPRIADFYEKREFGKAMREIMALADHANVYIADKAPWSLSKEEGKEQEVLAICSTAINVFRLLVIYLKPVLPALAERAEAFMQVEPLTWADSEQLLLGHEIAKFKPLLSRVDMAQVESMLEDSKESTPAPAAAKPKKAATQKADAADNDETISIDDFLKVKLRVARVAKAAHVDGADKLLQLTLDVGELGQRNVFAGIKARYAPEELEGKLVVLVANLAPRKMKFGISEGMVLAAGPGGDDIHILSPDSGAEPGMEVR.

The 'HIGH' region motif lies at 22 to 32 (PYANGPIHLGH). Zn(2+) contacts are provided by Cys153, Cys156, Cys166, and Cys169. Residues 337–341 (KMSKS) carry the 'KMSKS' region motif. Lys340 is an ATP binding site. A disordered region spans residues 547-573 (MLEDSKESTPAPAAAKPKKAATQKADA). Residues 584-686 (DFLKVKLRVA…SGAEPGMEVR (103 aa)) form the tRNA-binding domain.

The protein belongs to the class-I aminoacyl-tRNA synthetase family. MetG type 1 subfamily. As to quaternary structure, homodimer. Requires Zn(2+) as cofactor.

The protein resides in the cytoplasm. It carries out the reaction tRNA(Met) + L-methionine + ATP = L-methionyl-tRNA(Met) + AMP + diphosphate. Is required not only for elongation of protein synthesis but also for the initiation of all mRNA translation through initiator tRNA(fMet) aminoacylation. This Alcanivorax borkumensis (strain ATCC 700651 / DSM 11573 / NCIMB 13689 / SK2) protein is Methionine--tRNA ligase.